A 111-amino-acid chain; its full sequence is Cytochrome c (111 aa).

Ala-1 bears the N-acetylalanine mark. Residues Cys-22, Cys-25, and His-26 each contribute to the heme c site. Position 80 is an N6,N6,N6-trimethyllysine (Lys-80). Residue Met-88 participates in heme c binding. Residue Lys-94 is modified to N6,N6,N6-trimethyllysine.

It belongs to the cytochrome c family. Post-translationally, binds 1 heme c group covalently per subunit.

The protein localises to the mitochondrion intermembrane space. Functionally, electron carrier protein. The oxidized form of the cytochrome c heme group can accept an electron from the heme group of the cytochrome c1 subunit of cytochrome reductase. Cytochrome c then transfers this electron to the cytochrome oxidase complex, the final protein carrier in the mitochondrial electron-transport chain. This chain is Cytochrome c, found in Vigna radiata var. radiata (Mung bean).